Reading from the N-terminus, the 415-residue chain is Peptide chain release factor subunit 1 (415 aa).

This sequence belongs to the eukaryotic release factor 1 family. In terms of assembly, heterodimer of two subunits, one of which binds GTP.

It is found in the cytoplasm. Functionally, directs the termination of nascent peptide synthesis (translation) in response to the termination codons UAA, UAG and UGA. This is Peptide chain release factor subunit 1 from Thermococcus kodakarensis (strain ATCC BAA-918 / JCM 12380 / KOD1) (Pyrococcus kodakaraensis (strain KOD1)).